The following is a 758-amino-acid chain: 5-methyltetrahydropteroyltriglutamate--homocysteine methyltransferase (758 aa).

5-methyltetrahydropteroyltri-L-glutamate-binding positions include 17-20 (RELK) and Lys117. Residues 434 to 436 (IGS) and Glu487 each bind L-homocysteine. Residues 434–436 (IGS) and Glu487 contribute to the L-methionine site. 5-methyltetrahydropteroyltri-L-glutamate-binding positions include 518-519 (RC) and Trp564. Asp602 contacts L-homocysteine. Asp602 provides a ligand contact to L-methionine. Position 608 (Glu608) interacts with 5-methyltetrahydropteroyltri-L-glutamate. 3 residues coordinate Zn(2+): His644, Cys646, and Glu668. His697 acts as the Proton donor in catalysis. Zn(2+) is bound at residue Cys729.

This sequence belongs to the vitamin-B12 independent methionine synthase family. Zn(2+) is required as a cofactor.

The enzyme catalyses 5-methyltetrahydropteroyltri-L-glutamate + L-homocysteine = tetrahydropteroyltri-L-glutamate + L-methionine. It functions in the pathway amino-acid biosynthesis; L-methionine biosynthesis via de novo pathway; L-methionine from L-homocysteine (MetE route): step 1/1. Its function is as follows. Catalyzes the transfer of a methyl group from 5-methyltetrahydrofolate to homocysteine resulting in methionine formation. The polypeptide is 5-methyltetrahydropteroyltriglutamate--homocysteine methyltransferase (Yersinia pseudotuberculosis serotype O:1b (strain IP 31758)).